Reading from the N-terminus, the 97-residue chain is UPF0147 protein MA_0092 (97 aa).

This sequence belongs to the UPF0147 family.

The protein is UPF0147 protein MA_0092 of Methanosarcina acetivorans (strain ATCC 35395 / DSM 2834 / JCM 12185 / C2A).